Here is a 1521-residue protein sequence, read N- to C-terminus: Suppressor of Ty 6 homolog (1521 aa).

Residues 1-204 (MDFIDNQAEE…EGAEDDARDV (204 aa)) form a disordered region. Residues 26–41 (KKMKMAKDKLKKKKKV) show a composition bias toward basic residues. The Nuclear localization signal motif lies at 26–42 (KKMKMAKDKLKKKKKVV). Acidic residues-rich tracts occupy residues 45–56 (SDEDEDDEDDEE) and 67–76 (ADEDDEEEDA). Residues 77–89 (RSEKSDRSRRSEI) show a composition bias toward basic and acidic residues. The segment covering 90-103 (NDELDDEDLDLIDE) has biased composition (acidic residues). Residues 127-149 (PIRRSNQDDDDLQSERGSDDGDK) show a composition bias toward basic and acidic residues. The span at 167-177 (RSEDDFIEDDG) shows a compositional bias: acidic residues. The S1 motif domain maps to 1182 to 1251 (LNAGRPGGCV…EKFSILLSCK (70 aa)). The 90-residue stretch at 1299 to 1388 (HPNFHNVSYE…IARFVLPMIQ (90 aa)) folds into the SH2 domain. Residues 1490 to 1521 (GIRSSLSYRPTGRTGPPPSAPYQQPPQQQYYR) are disordered. Pro residues predominate over residues 1504-1513 (GPPPSAPYQQ).

It belongs to the SPT6 family. In terms of assembly, interacts with glp-1 and lin-12.

Its subcellular location is the nucleus. Histone H3-H4 chaperone that plays a role in maintenance of chromatin structure during RNA polymerase II transcription elongation. May be required for several aspects of morphogenesis of C.briggsae, including regulation of division in the germline and gut and specification of ventral-uterine precursor cell fate. The polypeptide is Suppressor of Ty 6 homolog (emb-5) (Caenorhabditis briggsae).